The primary structure comprises 65 residues: Ferredoxin-like protein in vnf region (65 aa).

4Fe-4S ferredoxin-type domains are found at residues 2 to 29 and 30 to 65; these read AMAIDGYECTVCGDCKPVCPTGSIVLQG and GIYVIDADSCNECADLGEPRCLGVCPVDFCIQPLDD. Residues C10, C13, C16, C20, C39, C42, C50, and C54 each contribute to the [4Fe-4S] cluster site.

It depends on [4Fe-4S] cluster as a cofactor.

In Azotobacter chroococcum mcd 1, this protein is Ferredoxin-like protein in vnf region.